We begin with the raw amino-acid sequence, 155 residues long: Probable Brix domain-containing ribosomal biogenesis protein (155 aa).

The region spanning 1–155 (MLITSSRKPS…KNYRKMVMSE (155 aa)) is the Brix domain.

Its function is as follows. Probably involved in the biogenesis of the ribosome. The chain is Probable Brix domain-containing ribosomal biogenesis protein from Methanococcoides burtonii (strain DSM 6242 / NBRC 107633 / OCM 468 / ACE-M).